Consider the following 244-residue polypeptide: 5-oxoprolinase subunit A (244 aa).

The protein belongs to the LamB/PxpA family. Forms a complex composed of PxpA, PxpB and PxpC.

It catalyses the reaction 5-oxo-L-proline + ATP + 2 H2O = L-glutamate + ADP + phosphate + H(+). In terms of biological role, catalyzes the cleavage of 5-oxoproline to form L-glutamate coupled to the hydrolysis of ATP to ADP and inorganic phosphate. The sequence is that of 5-oxoprolinase subunit A from Escherichia coli O157:H7.